The following is a 704-amino-acid chain: Structure-specific endonuclease subunit SLX1 homolog (704 aa).

One can recognise a GIY-YIG domain in the interval 4–90 (RFHCVYLLTS…TASARLRHTI (87 aa)). 3 disordered regions span residues 157–180 (ESPR…ADGV), 290–323 (ASFA…RVRT), and 354–378 (GAAL…SRPP). Composition is skewed to polar residues over residues 161 to 175 (VGTQ…SLQG) and 311 to 320 (AGSSTPSPQR). The SLX1-type zinc finger occupies 446 to 526 (CSLCALPLQP…PSQPCPCPLC (81 aa)). Disordered stretches follow at residues 601–629 (VPGA…SSPI) and 650–671 (ASLA…GHSN). A compositionally biased stretch (low complexity) spans 650 to 662 (ASLAALSPTSASP).

Belongs to the SLX1 family. Forms a heterodimer with a member of the SLX4 family. The cofactor is a divalent metal cation.

The protein localises to the nucleus. Its function is as follows. Catalytic subunit of a heterodimeric structure-specific endonuclease that resolves DNA secondary structures generated during DNA repair and recombination. Has endonuclease activity towards branched DNA substrates, introducing single-strand cuts in duplex DNA close to junctions with ss-DNA. The polypeptide is Structure-specific endonuclease subunit SLX1 homolog (Leishmania major).